An 860-amino-acid chain; its full sequence is MQEQYRPEEIESKVQLHWDEKRTFEVTEDESKEKYYCLSMLPYPSGRLHMGHVRNYTIGDVVARYQRMLGKNVLQPIGWDAFGLPAEGAAVKNNTAPAPWTYDNIAYMKNQLKTLGFGYDWSREIATCTPEYYRWEQKFFTELYKKGLVYKKTSAVNWCPNDQTVLANEQVIDGCCWRCDTKVERKEIPQWFIKITAYADELLRDLDKLDHWPDTVKTMQRNWIGRSEGVEITFDVKGYDNTLTVYTTRPDTFMGATYLAVAAGHPLAQKAAANNAELAAFIDECRNTKVAEAEMATMEKKGVDTGYKAIHPLTGEEIPVWAANFVLMEYGTGAVMAVPGHDQRDYEFASKYGLTIKPVILAADGSEPDLSEQALTEKGVLFNSGEFDGLAFEAAFNAIADKLAEKGVGERKVNYRLRDWGVSRQRYWGAPIPMVTLEDGTVLPTPEDQLPVILPEDVVMDGITSPIKADPEWAKTTVNGMPALRETDTFDTFMESSWYYARYTCPQYQEGMLDSKAANYWLPVDIYIGGIEHAIMHLLYFRFFHKLMRDAGMVTSDEPAKQLLCQGMVLADAFYYVGENGERNWVSPVDAIVERDEKGRIVKAKDAAGHELVYTGMSKMSKSKNNGIDPQVMVERYGADTVRLFMMFASPADMTLEWQESGVEGANRFIKRVWKLVYEHTAKGSVAALNVDALSEDQKALRRDVHKTIAKVTDDIGRRQTFNTAIAAIMELMNKLAKAPQEGEQDRALLQEALQAVVRMLNPFTPHVCFTLWQELGGEGDIDNAPWPVADEQAMVENTTLVVVQVNGKVRGKITVAVDATEEQVRERAGQEHLVAKYLDGVTVRKVIYVPGKLLNLVVG.

The 'HIGH' region motif lies at 42 to 52 (PYPSGRLHMGH). Residues 619 to 623 (KMSKS) carry the 'KMSKS' region motif. Lys622 serves as a coordination point for ATP.

This sequence belongs to the class-I aminoacyl-tRNA synthetase family.

It localises to the cytoplasm. The enzyme catalyses tRNA(Leu) + L-leucine + ATP = L-leucyl-tRNA(Leu) + AMP + diphosphate. This chain is Leucine--tRNA ligase, found in Salmonella paratyphi B (strain ATCC BAA-1250 / SPB7).